The sequence spans 267 residues: Large ribosomal subunit protein bL9m (267 aa).

The transit peptide at 1–52 (MAAPVVTAPGRALLRAGAGRLLRGGVQELLRPRHEGNAPDLACNFSLSQNRG) directs the protein to the mitochondrion.

The protein belongs to the bacterial ribosomal protein bL9 family. As to quaternary structure, component of the mitochondrial large ribosomal subunit (mt-LSU). Mature mammalian 55S mitochondrial ribosomes consist of a small (28S) and a large (39S) subunit. The 28S small subunit contains a 12S ribosomal RNA (12S mt-rRNA) and 30 different proteins. The 39S large subunit contains a 16S rRNA (16S mt-rRNA), a copy of mitochondrial valine transfer RNA (mt-tRNA(Val)), which plays an integral structural role, and 52 different proteins.

The protein resides in the mitochondrion. This is Large ribosomal subunit protein bL9m (MRPL9) from Homo sapiens (Human).